A 186-amino-acid polypeptide reads, in one-letter code: Ribosome-recycling factor (186 aa).

The tract at residues 135–162 is disordered; that stretch reads DGMDGLKKAEKDGDIGQDESRAQSERVQ.

It belongs to the RRF family.

It localises to the cytoplasm. Responsible for the release of ribosomes from messenger RNA at the termination of protein biosynthesis. May increase the efficiency of translation by recycling ribosomes from one round of translation to another. The polypeptide is Ribosome-recycling factor (Sinorhizobium fredii (strain NBRC 101917 / NGR234)).